The chain runs to 60 residues: Putative insect toxin Acra6 (60 aa).

The LCN-type CS-alpha/beta domain occupies 2-60; sequence RDGYIRRKDEFKFKCYVDGKDCDDVCKSEGGSAGYCTALGFLCYCAGLPDDKAWKPTSS. Disulfide bonds link Cys16-Cys37, Cys23-Cys44, and Cys27-Cys46.

It belongs to the long (4 C-C) scorpion toxin superfamily. Sodium channel inhibitor family. Beta subfamily. In terms of tissue distribution, expressed by the venom gland.

It is found in the secreted. Functionally, depressant insect toxins cause a transient contraction paralysis followed by a slow flaccid paralysis. They bind voltage-independently to sodium channels (Nav) and block action potentials, primarily by depolarizing the axonal membrane and suppressing the sodium current. The chain is Putative insect toxin Acra6 from Androctonus crassicauda (Arabian fat-tailed scorpion).